The following is a 171-amino-acid chain: Protein FAM209A (171 aa).

Residues 1–19 (MWTLKSSLVLLLCLTCSYA) form the signal peptide. Over 20–52 (FMFSSLRQKTSEPQGKVQYGEHFRIRQNLPEHT) the chain is Extracellular. A helical membrane pass occupies residues 53 to 73 (QGWLGSKWLWLLFVVVPFVIL). At 74-171 (QCQRDSEKNK…CEIWGEESSS (98 aa)) the chain is on the cytoplasmic side. The disordered stretch occupies residues 81 to 107 (KNKEQSPPGLRGGQLHSPLKKKRNASP). The stretch at 114–139 (NTLMELEVELMKFVSKVRNLKRAMAT) forms a coiled coil.

The protein belongs to the FAM209 family. In terms of assembly, interacts with DPY19L2. Interacts with CYLC1; the interaction may be relevant for proper acrosome attachment to the nuclear envelope.

Its subcellular location is the nucleus inner membrane. Its function is as follows. May play a role in sperm acrosome biogenesis. The polypeptide is Protein FAM209A (Homo sapiens (Human)).